The primary structure comprises 245 residues: 1-(5-phosphoribosyl)-5-[(5-phosphoribosylamino)methylideneamino] imidazole-4-carboxamide isomerase (245 aa).

Aspartate 11 (proton acceptor) is an active-site residue. Aspartate 132 serves as the catalytic Proton donor.

This sequence belongs to the HisA/HisF family.

Its subcellular location is the cytoplasm. It catalyses the reaction 1-(5-phospho-beta-D-ribosyl)-5-[(5-phospho-beta-D-ribosylamino)methylideneamino]imidazole-4-carboxamide = 5-[(5-phospho-1-deoxy-D-ribulos-1-ylimino)methylamino]-1-(5-phospho-beta-D-ribosyl)imidazole-4-carboxamide. It functions in the pathway amino-acid biosynthesis; L-histidine biosynthesis; L-histidine from 5-phospho-alpha-D-ribose 1-diphosphate: step 4/9. In Bacillus velezensis (strain DSM 23117 / BGSC 10A6 / LMG 26770 / FZB42) (Bacillus amyloliquefaciens subsp. plantarum), this protein is 1-(5-phosphoribosyl)-5-[(5-phosphoribosylamino)methylideneamino] imidazole-4-carboxamide isomerase.